We begin with the raw amino-acid sequence, 199 residues long: Dephospho-CoA kinase (199 aa).

The 197-residue stretch at 3 to 199 (KVGLTGGICS…DLLEFFTLYQ (197 aa)) folds into the DPCK domain. 11 to 16 (CSGKST) lines the ATP pocket.

It belongs to the CoaE family.

It localises to the cytoplasm. The catalysed reaction is 3'-dephospho-CoA + ATP = ADP + CoA + H(+). It participates in cofactor biosynthesis; coenzyme A biosynthesis; CoA from (R)-pantothenate: step 5/5. Functionally, catalyzes the phosphorylation of the 3'-hydroxyl group of dephosphocoenzyme A to form coenzyme A. This is Dephospho-CoA kinase from Clostridium perfringens (strain 13 / Type A).